Reading from the N-terminus, the 289-residue chain is RNA-binding protein CP29B, chloroplastic (289 aa).

The N-terminal 62 residues, 1–62, are a transit peptide targeting the chloroplast; the sequence is MAASASSLAL…NSPASRFARN (62 aa). S6 and S12 each carry phosphoserine. N-acetylvaline is present on V63. The RRM 1 domain occupies 91 to 169; sequence LKLFVGNLPF…RPLRVNAGPP (79 aa). The tract at residues 158 to 199 is disordered; the sequence is DGRPLRVNAGPPPPKREDGFSRGPRSSFGSSGSGYGGGGGSG. The tract at residues 170-203 is linker (Gly-rich); it reads PPKREDGFSRGPRSSFGSSGSGYGGGGGSGAGSG. A compositionally biased stretch (low complexity) spans 178 to 187; that stretch reads SRGPRSSFGS. A compositionally biased stretch (gly residues) spans 188-199; that stretch reads SGSGYGGGGGSG. The 79-residue stretch at 204–282 folds into the RRM 2 domain; the sequence is NRVYVGNLSW…RQIRVSEAEA (79 aa).

ADP-ribosylated by the Pseudomonas syringae type III effector HopU1. ADP-ribosylation reduces the ability of the protein to bind RNA. Post-translationally, phosphorylated on tyrosine residues after treatment with abscisic acid (ABA). Phosphorylation may reduce the ability of the protein to bind RNA.

It localises to the plastid. The protein resides in the chloroplast. Functionally, could be involved in splicing and/or processing of chloroplast RNA's. This is RNA-binding protein CP29B, chloroplastic from Arabidopsis thaliana (Mouse-ear cress).